We begin with the raw amino-acid sequence, 205 residues long: Small ribosomal subunit protein uS4 (205 aa).

Residues Met-1 to Gly-16 are compositionally biased toward basic and acidic residues. The segment at Met-1–Ser-46 is disordered. An S4 RNA-binding domain is found at Ser-94–Val-157.

This sequence belongs to the universal ribosomal protein uS4 family. Part of the 30S ribosomal subunit. Contacts protein S5. The interaction surface between S4 and S5 is involved in control of translational fidelity.

In terms of biological role, one of the primary rRNA binding proteins, it binds directly to 16S rRNA where it nucleates assembly of the body of the 30S subunit. Functionally, with S5 and S12 plays an important role in translational accuracy. The chain is Small ribosomal subunit protein uS4 from Bartonella tribocorum (strain CIP 105476 / IBS 506).